The sequence spans 72 residues: Toxin Acra II-2 (72 aa).

The region spanning 3 to 67 (VPGNYPLNTN…VWNAAKNYCK (65 aa)) is the LCN-type CS-alpha/beta domain. Cystine bridges form between C18/C41, C27/C46, and C31/C48.

Belongs to the long (3 C-C) scorpion toxin superfamily. Sodium channel inhibitor family. Beta subfamily. Expressed by the venom gland.

The protein resides in the secreted. In terms of biological role, binds to sodium channels (Nav) and affects the channel activation process. In Androctonus crassicauda (Arabian fat-tailed scorpion), this protein is Toxin Acra II-2.